A 237-amino-acid polypeptide reads, in one-letter code: Demethylmenaquinone methyltransferase (237 aa).

Residues Thr-58, Asp-79, and 106 to 107 (NA) each bind S-adenosyl-L-methionine.

The protein belongs to the class I-like SAM-binding methyltransferase superfamily. MenG/UbiE family.

It catalyses the reaction a 2-demethylmenaquinol + S-adenosyl-L-methionine = a menaquinol + S-adenosyl-L-homocysteine + H(+). It functions in the pathway quinol/quinone metabolism; menaquinone biosynthesis; menaquinol from 1,4-dihydroxy-2-naphthoate: step 2/2. Methyltransferase required for the conversion of demethylmenaquinol (DMKH2) to menaquinol (MKH2). This is Demethylmenaquinone methyltransferase from Bacillus anthracis (strain A0248).